Consider the following 286-residue polypeptide: Beta-lactamase SHV-34 (286 aa).

The signal sequence occupies residues 1–21; it reads MRYFRLCIISLLATLPLAVHA. S66 acts as the Acyl-ester intermediate in catalysis. An intrachain disulfide couples C73 to C119. E164 (proton acceptor) is an active-site residue. 230-232 serves as a coordination point for substrate; that stretch reads KTG.

This sequence belongs to the class-A beta-lactamase family.

The catalysed reaction is a beta-lactam + H2O = a substituted beta-amino acid. In terms of biological role, hydrolyzes ceftazidime and cefotaxime. This is Beta-lactamase SHV-34 (bla) from Escherichia coli.